We begin with the raw amino-acid sequence, 256 residues long: Hydroxyacylglutathione hydrolase (256 aa).

Zn(2+)-binding residues include His-57, His-59, Asp-61, His-62, His-115, Asp-134, and His-172.

This sequence belongs to the metallo-beta-lactamase superfamily. Glyoxalase II family. Monomer. Zn(2+) serves as cofactor.

It catalyses the reaction an S-(2-hydroxyacyl)glutathione + H2O = a 2-hydroxy carboxylate + glutathione + H(+). The protein operates within secondary metabolite metabolism; methylglyoxal degradation; (R)-lactate from methylglyoxal: step 2/2. In terms of biological role, thiolesterase that catalyzes the hydrolysis of S-D-lactoyl-glutathione to form glutathione and D-lactic acid. The sequence is that of Hydroxyacylglutathione hydrolase from Rhizobium meliloti (strain 1021) (Ensifer meliloti).